The chain runs to 820 residues: Potassium channel GORK (820 aa).

Topologically, residues 1–69 (MGRLRRRQEI…PKNRWYKAWE (69 aa)) are cytoplasmic. Residues 70–90 (MFILVWAIYSSLFTPMEFGFF) form a helical membrane-spanning segment. The Extracellular segment spans residues 91–97 (RGLPERL). Residues 98–118 (FVLDIVGQIAFLVDIVLQFFV) traverse the membrane as a helical segment. Residues 119–141 (AYRDTQTYRTVYKPTRIAFRYLK) are Cytoplasmic-facing. The helical transmembrane segment at 142 to 162 (SHFLMDFIGCFPWDLIYKASG) threads the bilayer. The Extracellular portion of the chain corresponds to 163–168 (KHELVR). The chain crosses the membrane as a helical; Voltage-sensor span at residues 169 to 189 (YLLWIRLFRVRKVVEFFQRLE). Residues 190–203 (KDTRINYLFTRILK) are Cytoplasmic-facing. Residues 204-224 (LLFVEVYCTHTAACIFYYLAT) form a helical membrane-spanning segment. Residues 225-259 (TLPPENEGYTWIGSLKLGDYSYENFREIDLWKRYT) are Extracellular-facing. An intramembrane region (pore-forming) is located at residues 260-279 (TALYFAIVTMATVGYGDIHA). The Extracellular segment spans residues 280 to 285 (VNLREM). Residues 286–306 (IFVMIYVSFDMVLGAYLIGNI) form a helical membrane-spanning segment. Over 307–820 (TALIVKGSNT…YMISDTTDQT (514 aa)) the chain is Cytoplasmic. Position 386 to 508 (386 to 508 (LFKGCSTEFI…ILNNIMEEKE (123 aa))) interacts with a nucleoside 3',5'-cyclic phosphate. ANK repeat units lie at residues 528–559 (EAEL…DPNK), 563–592 (DGRS…DVNL), 596–625 (FGHT…SFNL), 627–656 (DSGN…NPNS), 660–689 (DHRT…SVIS), and 693–722 (WGNS…AQSS). Positions 740–820 (KCTVFPFHPQ…YMISDTTDQT (81 aa)) constitute a KHA domain.

The protein belongs to the potassium channel family. Plant (TC 1.A.1.4) subfamily. As to quaternary structure, the potassium channel is probably composed of a homo- or heterotetrameric complex of pore-forming subunits. As to expression, expressed in guard cell-containing tissues, in root epidermal cells and in root hairs. Detected in vascular cells of the root and shoot.

It is found in the membrane. Functionally, major selective outward-rectifying potassium channel of the guard cell membrane. Involved in regulation of stomatal movements according to the water status. Assuming opened or closed conformations in response to the voltage difference across the membrane, the channel is activated by depolarization. Conductance of the channel is modulated in a potassium-dependent fashion. May interact with the cytoskeleton or with regulatory proteins. This Arabidopsis thaliana (Mouse-ear cress) protein is Potassium channel GORK (GORK).